Here is a 711-residue protein sequence, read N- to C-terminus: Ribosomal RNA large subunit methyltransferase K/L (711 aa).

The 112-residue stretch at 43-154 (LGYRITLWSR…RGQITIGLNF (112 aa)) folds into the THUMP domain.

Belongs to the methyltransferase superfamily. RlmKL family.

The protein resides in the cytoplasm. The catalysed reaction is guanosine(2445) in 23S rRNA + S-adenosyl-L-methionine = N(2)-methylguanosine(2445) in 23S rRNA + S-adenosyl-L-homocysteine + H(+). It catalyses the reaction guanosine(2069) in 23S rRNA + S-adenosyl-L-methionine = N(2)-methylguanosine(2069) in 23S rRNA + S-adenosyl-L-homocysteine + H(+). Its function is as follows. Specifically methylates the guanine in position 2445 (m2G2445) and the guanine in position 2069 (m7G2069) of 23S rRNA. The sequence is that of Ribosomal RNA large subunit methyltransferase K/L from Shewanella sediminis (strain HAW-EB3).